The chain runs to 236 residues: Leucyl/phenylalanyl-tRNA--protein transferase (236 aa).

This sequence belongs to the L/F-transferase family.

The protein resides in the cytoplasm. It carries out the reaction N-terminal L-lysyl-[protein] + L-leucyl-tRNA(Leu) = N-terminal L-leucyl-L-lysyl-[protein] + tRNA(Leu) + H(+). The catalysed reaction is N-terminal L-arginyl-[protein] + L-leucyl-tRNA(Leu) = N-terminal L-leucyl-L-arginyl-[protein] + tRNA(Leu) + H(+). The enzyme catalyses L-phenylalanyl-tRNA(Phe) + an N-terminal L-alpha-aminoacyl-[protein] = an N-terminal L-phenylalanyl-L-alpha-aminoacyl-[protein] + tRNA(Phe). Its function is as follows. Functions in the N-end rule pathway of protein degradation where it conjugates Leu, Phe and, less efficiently, Met from aminoacyl-tRNAs to the N-termini of proteins containing an N-terminal arginine or lysine. The polypeptide is Leucyl/phenylalanyl-tRNA--protein transferase (Shewanella sp. (strain ANA-3)).